Reading from the N-terminus, the 102-residue chain is MTLTLAHYLILGAILFAIGIFGIFLNRRNLIILLMSIELVLLAVNMNFVAFSSWFGDIAGQVFVFFILTVAAAEAAIGLAILVLLFRNLNTINVDELDRLKG.

3 helical membrane passes run 5 to 25, 31 to 51, and 62 to 82; these read LAHY…GIFL, IILL…FVAF, and VFVF…LAIL.

The protein belongs to the complex I subunit 4L family. In terms of assembly, NDH-1 is composed of 14 different subunits. Subunits NuoA, H, J, K, L, M, N constitute the membrane sector of the complex.

The protein resides in the cell inner membrane. It carries out the reaction a quinone + NADH + 5 H(+)(in) = a quinol + NAD(+) + 4 H(+)(out). Functionally, NDH-1 shuttles electrons from NADH, via FMN and iron-sulfur (Fe-S) centers, to quinones in the respiratory chain. The immediate electron acceptor for the enzyme in this species is believed to be ubiquinone. Couples the redox reaction to proton translocation (for every two electrons transferred, four hydrogen ions are translocated across the cytoplasmic membrane), and thus conserves the redox energy in a proton gradient. This Bordetella parapertussis (strain 12822 / ATCC BAA-587 / NCTC 13253) protein is NADH-quinone oxidoreductase subunit K.